Reading from the N-terminus, the 874-residue chain is Alanine--tRNA ligase (874 aa).

Residues His562, His566, Cys665, and His669 each coordinate Zn(2+).

This sequence belongs to the class-II aminoacyl-tRNA synthetase family. It depends on Zn(2+) as a cofactor.

The protein resides in the cytoplasm. The catalysed reaction is tRNA(Ala) + L-alanine + ATP = L-alanyl-tRNA(Ala) + AMP + diphosphate. Its function is as follows. Catalyzes the attachment of alanine to tRNA(Ala) in a two-step reaction: alanine is first activated by ATP to form Ala-AMP and then transferred to the acceptor end of tRNA(Ala). Also edits incorrectly charged Ser-tRNA(Ala) and Gly-tRNA(Ala) via its editing domain. This chain is Alanine--tRNA ligase, found in Pseudomonas fluorescens (strain ATCC BAA-477 / NRRL B-23932 / Pf-5).